Here is a 116-residue protein sequence, read N- to C-terminus: Large ribosomal subunit protein bL20 (116 aa).

Belongs to the bacterial ribosomal protein bL20 family.

In terms of biological role, binds directly to 23S ribosomal RNA and is necessary for the in vitro assembly process of the 50S ribosomal subunit. It is not involved in the protein synthesizing functions of that subunit. This is Large ribosomal subunit protein bL20 from Desulfatibacillum aliphaticivorans.